Reading from the N-terminus, the 153-residue chain is Movement protein (153 aa).

2 disordered regions span residues 1 to 24 (MAQEGGAVEQFGQWLWSNPIEQDP) and 121 to 153 (PWVATLIPSQSAGPPQRSSEPKRLTGRNSRNQR). The segment covering 121–138 (PWVATLIPSQSAGPPQRS) has biased composition (polar residues).

The protein belongs to the luteoviruses movement protein family.

Transports viral genome to neighboring plant cells directly through plasmosdesmata, without any budding. The movement protein allows efficient cell to cell propagation, by bypassing the host cell wall barrier. The protein is Movement protein of Avena byzantina (Oat).